The chain runs to 248 residues: Triosephosphate isomerase (248 aa).

Substrate is bound at residue 9-11; that stretch reads NWK. The Electrophile role is filled by His94. The Proton acceptor role is filled by Glu166. Substrate-binding positions include Gly172, Ser211, and 232–233; that span reads GG.

The protein belongs to the triosephosphate isomerase family. Homodimer.

The protein resides in the cytoplasm. The catalysed reaction is D-glyceraldehyde 3-phosphate = dihydroxyacetone phosphate. The protein operates within carbohydrate biosynthesis; gluconeogenesis. It participates in carbohydrate degradation; glycolysis; D-glyceraldehyde 3-phosphate from glycerone phosphate: step 1/1. Its function is as follows. Involved in the gluconeogenesis. Catalyzes stereospecifically the conversion of dihydroxyacetone phosphate (DHAP) to D-glyceraldehyde-3-phosphate (G3P). This Vesicomyosocius okutanii subsp. Calyptogena okutanii (strain HA) protein is Triosephosphate isomerase.